We begin with the raw amino-acid sequence, 636 residues long: DNA-directed RNA polymerase subunit beta' (636 aa).

Cys-70, Cys-72, Cys-85, and Cys-88 together coordinate Zn(2+). Mg(2+) is bound by residues Asp-471, Asp-473, and Asp-475.

This sequence belongs to the RNA polymerase beta' chain family. RpoC1 subfamily. It depends on Mg(2+) as a cofactor. Zn(2+) is required as a cofactor.

It localises to the plastid. It is found in the cyanelle. The catalysed reaction is RNA(n) + a ribonucleoside 5'-triphosphate = RNA(n+1) + diphosphate. DNA-dependent RNA polymerase catalyzes the transcription of DNA into RNA using the four ribonucleoside triphosphates as substrates. The chain is DNA-directed RNA polymerase subunit beta' from Cyanophora paradoxa.